Here is a 253-residue protein sequence, read N- to C-terminus: Adenosylcobinamide-GDP ribazoletransferase (253 aa).

7 helical membrane passes run 33-53 (ISPL…YVLL), 56-76 (ILEA…RGFN), 106-126 (IGSG…VALL), 132-152 (FYTI…GLYI), 178-198 (VLLF…FLVF), 209-229 (LGGS…PLFL), and 233-253 (EITN…LYLH).

Belongs to the CobS family. Mg(2+) serves as cofactor.

The protein localises to the cell membrane. It catalyses the reaction alpha-ribazole + adenosylcob(III)inamide-GDP = adenosylcob(III)alamin + GMP + H(+). It carries out the reaction alpha-ribazole 5'-phosphate + adenosylcob(III)inamide-GDP = adenosylcob(III)alamin 5'-phosphate + GMP + H(+). It participates in cofactor biosynthesis; adenosylcobalamin biosynthesis; adenosylcobalamin from cob(II)yrinate a,c-diamide: step 7/7. In terms of biological role, joins adenosylcobinamide-GDP and alpha-ribazole to generate adenosylcobalamin (Ado-cobalamin). Also synthesizes adenosylcobalamin 5'-phosphate from adenosylcobinamide-GDP and alpha-ribazole 5'-phosphate. This Saccharolobus islandicus (strain M.16.27) (Sulfolobus islandicus) protein is Adenosylcobinamide-GDP ribazoletransferase.